The chain runs to 161 residues: DNA-directed RNA polymerase 18 kDa subunit (161 aa).

Belongs to the poxviridae DNA-directed RNA polymerase 18 kDa subunit family. The DNA-dependent RNA polymerase used for intermediate and late genes expression consists of eight subunits Rpo30/OPG66, Rpo7/OPG90, Rpo22/OPG103, Rpo147/OPG105, Rpo18/OPG119, Rpo19/OPG131, Rpo132/OPG151 and Rpo35/OPG156. The same holoenzyme, with the addition of the transcription-specificity factor OPG109, is used for early gene expression.

The protein resides in the virion. It catalyses the reaction RNA(n) + a ribonucleoside 5'-triphosphate = RNA(n+1) + diphosphate. In terms of biological role, part of the DNA-dependent RNA polymerase which catalyzes the transcription of viral DNA into RNA using the four ribonucleoside triphosphates as substrates. Responsible for the transcription of early, intermediate and late genes. DNA-dependent RNA polymerase associates with the early transcription factor (ETF), itself composed of OPG118 and OPG133, thereby allowing the early genes transcription. Late transcription, and probably also intermediate transcription, require newly synthesized RNA polymerase. This is DNA-directed RNA polymerase 18 kDa subunit (OPG119) from Vaccinia virus (strain Ankara) (VACV).